Consider the following 396-residue polypeptide: Ornithine aminotransferase (396 aa).

Residue Lys-255 is modified to N6-(pyridoxal phosphate)lysine.

Belongs to the class-III pyridoxal-phosphate-dependent aminotransferase family. OAT subfamily. It depends on pyridoxal 5'-phosphate as a cofactor.

The protein localises to the cytoplasm. The enzyme catalyses a 2-oxocarboxylate + L-ornithine = L-glutamate 5-semialdehyde + an L-alpha-amino acid. The protein operates within amino-acid biosynthesis; L-proline biosynthesis; L-glutamate 5-semialdehyde from L-ornithine: step 1/1. In terms of biological role, catalyzes the interconversion of ornithine to glutamate semialdehyde. In Staphylococcus carnosus (strain TM300), this protein is Ornithine aminotransferase.